The primary structure comprises 311 residues: Ketoisovalerate oxidoreductase subunit VorB (311 aa).

As to quaternary structure, heterotetramer of one alpha, one beta, one delta and one gamma chain.

It carries out the reaction 3-methyl-2-oxobutanoate + 2 oxidized [2Fe-2S]-[ferredoxin] + CoA = 2-methylpropanoyl-CoA + 2 reduced [2Fe-2S]-[ferredoxin] + CO2 + H(+). This is Ketoisovalerate oxidoreductase subunit VorB (vorB) from Pyrococcus abyssi (strain GE5 / Orsay).